The chain runs to 428 residues: Enolase (428 aa).

A (2R)-2-phosphoglycerate-binding site is contributed by glutamine 162. The Proton donor role is filled by glutamate 204. The Mg(2+) site is built by aspartate 241, glutamate 283, and aspartate 310. Lysine 335, arginine 364, serine 365, and lysine 386 together coordinate (2R)-2-phosphoglycerate. The Proton acceptor role is filled by lysine 335.

The protein belongs to the enolase family. It depends on Mg(2+) as a cofactor.

The protein localises to the cytoplasm. It is found in the secreted. The protein resides in the cell surface. It carries out the reaction (2R)-2-phosphoglycerate = phosphoenolpyruvate + H2O. It participates in carbohydrate degradation; glycolysis; pyruvate from D-glyceraldehyde 3-phosphate: step 4/5. In terms of biological role, catalyzes the reversible conversion of 2-phosphoglycerate (2-PG) into phosphoenolpyruvate (PEP). It is essential for the degradation of carbohydrates via glycolysis. This chain is Enolase, found in Nocardia farcinica (strain IFM 10152).